The primary structure comprises 434 residues: GPI-anchor transamidase component PIGU (434 aa).

At Met1–Ala3 the chain is on the cytoplasmic side. The chain crosses the membrane as a helical span at residues Pro4–Ser22. Residues Ser23–Asp78 are Lumenal-facing. The chain crosses the membrane as a helical span at residues Tyr79 to Ile99. Topologically, residues Gln100–Ile136 are cytoplasmic. A run of 4 helical transmembrane segments spans residues Pro137–Ser157, Thr158–Ser177, Val178–Leu193, and Tyr194–Leu204. The Cytoplasmic segment spans residues Tyr205–Phe221. Lys215 is an a cardiolipin binding site. A helical transmembrane segment spans residues Trp222–Ser243. Over Phe244–Ser285 the chain is Lumenal. The chain crosses the membrane as a helical span at residues Leu286–Ile305. The Cytoplasmic portion of the chain corresponds to Lys306–His310. Lys308 is a binding site for a cardiolipin. The next 2 membrane-spanning stretches (helical) occupy residues Pro311–Thr330 and Val331–Trp344. At Asn345 to Asn353 the chain is on the cytoplasmic side. The chain crosses the membrane as a helical span at residues Ile354–Leu371. Topologically, residues Trp372–Ser383 are lumenal. A 2-acyl-6-[6-phosphoethanolamine-alpha-D-mannosyl-(1-&gt;2)-6-phosphoethanolamine-alpha-D-mannosyl-(1-&gt;6)-2-phosphoethanolamine-alpha-D-mannosyl-(1-&gt;4)-alpha-D-glucosaminyl]-1-(1-radyl,2-acyl-sn-glycero-3-phospho)-1D-myo-inositol is bound by residues Asn382 and Asn384. A helical membrane pass occupies residues Asn384–Phe405. Residues Tyr406–Lys434 lie on the Cytoplasmic side of the membrane.

Belongs to the PIGU family. Heteropentamer. Part of the GPI-anchor transamidase complex, consisting of PIGK, PIGT, PIGS, PIGU and GAA1.

It is found in the endoplasmic reticulum membrane. It functions in the pathway glycolipid biosynthesis; glycosylphosphatidylinositol-anchor biosynthesis. In terms of biological role, component of the glycosylphosphatidylinositol-anchor (GPI-anchor) transamidase (GPI-T) complex that catalyzes the formation of the linkage between a proprotein and a GPI-anchor and participates in GPI anchored protein biosynthesis. Binds the lipid portion of GPI-anchor. May act as an organizer in the transmembrane layer to recruit other subunits, and thus is essential for assembly of the complex. The sequence is that of GPI-anchor transamidase component PIGU from Mus musculus (Mouse).